A 358-amino-acid polypeptide reads, in one-letter code: Acetylxylan esterase / glucomannan deacetylase (358 aa).

The N-terminal stretch at 1-18 is a signal peptide; the sequence is MKLLFPILLLTGSYFLSA. A lipid anchor (N-palmitoyl cysteine) is attached at Cys19. Cys19 is lipidated: S-diacylglycerol cysteine. Ser160 functions as the Nucleophile in the catalytic mechanism. Active-site charge relay system residues include Asp333 and His335.

Belongs to the carbohydrate esterase 2 (CE2) family.

The protein resides in the cell membrane. The catalysed reaction is Deacetylation of xylans and xylo-oligosaccharides.. It participates in glycan degradation; xylan degradation. Involved in the degradation of plant cell wall polysaccharides. Catalyzes the deacetylation of acetylated birchwood xylan and glucomannan, with equal efficiency, and of the synthetic substrate 4-nitrophenyl acetate (4-NPAc). Does not bind cellulose, cellohexaose and beta-glucan. This chain is Acetylxylan esterase / glucomannan deacetylase, found in Cellvibrio japonicus (strain Ueda107) (Pseudomonas fluorescens subsp. cellulosa).